The sequence spans 207 residues: MSNKNTFEGTTTVGITCKDGVVFASERRASMGNLVAHKVAEKIFKIDNHIAATIAGSVADAQTLMKVISAETSLYRLRNGKDISLEAAAAVSSNILHSSPAYVQTLIGGVDDTGASIYSLDAAGGMIKDTFISTGSGSTFAYGVLEDRFYEDITVEEATEVAIRAIKAATERDTFSGNGFLVANVTKDGFKMLEKEEVDAIIEKINS.

The propeptide at 1-9 (MSNKNTFEG) is removed in mature form; by autocatalysis. T10 acts as the Nucleophile in catalysis.

This sequence belongs to the peptidase T1B family. In terms of assembly, the 20S proteasome core is composed of 14 alpha and 14 beta subunits that assemble into four stacked heptameric rings, resulting in a barrel-shaped structure. The two inner rings, each composed of seven catalytic beta subunits, are sandwiched by two outer rings, each composed of seven alpha subunits. The catalytic chamber with the active sites is on the inside of the barrel. Has a gated structure, the ends of the cylinder being occluded by the N-termini of the alpha-subunits. Is capped at one or both ends by the proteasome regulatory ATPase, PAN.

The protein localises to the cytoplasm. The catalysed reaction is Cleavage of peptide bonds with very broad specificity.. Its activity is regulated as follows. The formation of the proteasomal ATPase PAN-20S proteasome complex, via the docking of the C-termini of PAN into the intersubunit pockets in the alpha-rings, triggers opening of the gate for substrate entry. Interconversion between the open-gate and close-gate conformations leads to a dynamic regulation of the 20S proteasome proteolysis activity. In terms of biological role, component of the proteasome core, a large protease complex with broad specificity involved in protein degradation. The chain is Proteasome subunit beta from Methanobrevibacter ruminantium (strain ATCC 35063 / DSM 1093 / JCM 13430 / OCM 146 / M1) (Methanobacterium ruminantium).